The primary structure comprises 113 residues: Prefoldin subunit beta (113 aa).

This sequence belongs to the prefoldin subunit beta family. As to quaternary structure, heterohexamer of two alpha and four beta subunits.

The protein localises to the cytoplasm. Its function is as follows. Molecular chaperone capable of stabilizing a range of proteins. Seems to fulfill an ATP-independent, HSP70-like function in archaeal de novo protein folding. The chain is Prefoldin subunit beta from Methanococcus maripaludis (strain DSM 14266 / JCM 13030 / NBRC 101832 / S2 / LL).